The primary structure comprises 722 residues: Biotin--protein ligase (722 aa).

The tract at residues 27 to 93 (KELGKASDKQ…EPAADGDPGL (67 aa)) is disordered. The segment covering 46-55 (ASPEAQPAQG) has biased composition (low complexity). Ser-295 carries the phosphoserine modification. The region spanning 459-648 (TRLGKVILFA…VLEKLIDRFQ (190 aa)) is the BPL/LPL catalytic domain.

Belongs to the biotin--protein ligase family. Monomer.

Its subcellular location is the cytoplasm. It is found in the mitochondrion. The enzyme catalyses apo-[methylmalonyl-CoA:pyruvate carboxytransferase] + biotin + ATP = holo-[methylmalonyl-CoA:pyruvate carboxytransferase] + AMP + diphosphate + H(+). It carries out the reaction apo-[propionyl-CoA:carbon-dioxide ligase (ADP-forming)] + biotin + ATP = holo-[propionyl-CoA:carbon-dioxide ligase (ADP-forming)] + AMP + diphosphate + H(+). The catalysed reaction is apo-[3-methylcrotonoyl-CoA:carbon-dioxide ligase (ADP-forming)] + biotin + ATP = holo-[3-methylcrotonoyl-CoA:carbon-dioxide ligase (ADP-forming)] + AMP + diphosphate + H(+). It catalyses the reaction biotin + L-lysyl-[protein] + ATP = N(6)-biotinyl-L-lysyl-[protein] + AMP + diphosphate + H(+). Functionally, biotin--protein ligase catalyzing the biotinylation of the 4 biotin-dependent carboxylases acetyl-CoA-carboxylase, pyruvate carboxylase, propionyl-CoA carboxylase, and methylcrotonyl-CoA carboxylase. The protein is Biotin--protein ligase of Mus musculus (Mouse).